We begin with the raw amino-acid sequence, 193 residues long: Acyl carrier protein phosphodiesterase (193 aa).

It belongs to the AcpH family.

The enzyme catalyses holo-[ACP] + H2O = apo-[ACP] + (R)-4'-phosphopantetheine + H(+). Converts holo-ACP to apo-ACP by hydrolytic cleavage of the phosphopantetheine prosthetic group from ACP. In Escherichia coli O6:H1 (strain CFT073 / ATCC 700928 / UPEC), this protein is Acyl carrier protein phosphodiesterase.